The sequence spans 526 residues: ATP synthase subunit alpha (526 aa).

171–178 (GDRQTGKT) is a binding site for ATP.

This sequence belongs to the ATPase alpha/beta chains family. In terms of assembly, F-type ATPases have 2 components, CF(1) - the catalytic core - and CF(0) - the membrane proton channel. CF(1) has five subunits: alpha(3), beta(3), gamma(1), delta(1), epsilon(1). CF(0) has four main subunits: a, b, b' and c.

The protein localises to the cell inner membrane. It carries out the reaction ATP + H2O + 4 H(+)(in) = ADP + phosphate + 5 H(+)(out). Produces ATP from ADP in the presence of a proton gradient across the membrane. The alpha chain is a regulatory subunit. The polypeptide is ATP synthase subunit alpha (Chlorobium phaeobacteroides (strain BS1)).